The chain runs to 642 residues: Zinc finger protein 14 (642 aa).

The 73-residue stretch at 4–76 folds into the KRAB domain; sequence VSFEDVAVNF…MVERLCESRK (73 aa). The segment at 103 to 125 adopts a C2H2-type 1 zinc-finger fold; it reads HECSFCGRDFMHHSSLNRHMRSH. The C2H2-type 2; degenerate zinc-finger motif lies at 141–163; the sequence is RKHKAVEKTFSYHHCFRKHERTH. Residues 169-191 form a C2H2-type 3 zinc finger; sequence YECKQCGKAFIYYQPFQRHERTH. The C2H2-type 4; atypical zinc finger occupies 197–217; it reads YECKQCGKTFIYYQSFQQHAH. 15 C2H2-type zinc fingers span residues 223–245, 251–273, 279–301, 307–329, 335–357, 363–385, 391–413, 419–441, 447–469, 475–497, 503–525, 531–553, 559–581, 587–609, and 615–637; these read YECKQCGKAFICYQSFQRHERTH, YECKQCGKAFSCPTYFRTHERTH, YKCKECGKAFSFLSSFRRHKRTH, YECKECGKAFFYSASFRAHVITH, YKCKECGKAFNSSNSCRVHERTH, YECKQCGKSFSWSISLRLHERTH, YECKQCHKTFSFSSSLREHETTH, YECKQCGKTFSFSSSLQRHERTH, YECKQCGKAFRCSSYFRIHERSH, YECKQCGKVFIRSSSFRLHERTH, YECKLCSKTFSFSSSLREHEKIH, FECKQCGKAFLRSSQIRLHERTH, YQCKQCGKAFISSSKFRMHERTH, YRCKQCGKAFRFSSSVRIHERSH, and YECKQCGKAFISSSHFRLHERTH.

The protein belongs to the krueppel C2H2-type zinc-finger protein family.

It localises to the nucleus. Functionally, may be involved in transcriptional regulation. The polypeptide is Zinc finger protein 14 (ZNF14) (Pongo abelii (Sumatran orangutan)).